The chain runs to 129 residues: Small ribosomal subunit protein eS6 (129 aa).

Residues 53–88 (TGGSDTSGRPMRPDVRGVTTKEIMSDGGVGFEPTTD) form a disordered region.

This sequence belongs to the eukaryotic ribosomal protein eS6 family.

This is Small ribosomal subunit protein eS6 (rps6e) from Haloarcula marismortui (strain ATCC 43049 / DSM 3752 / JCM 8966 / VKM B-1809) (Halobacterium marismortui).